The primary structure comprises 152 residues: D-aminoacyl-tRNA deacylase (152 aa).

The short motif at 142-143 is the Gly-cisPro motif, important for rejection of L-amino acids element; sequence GP.

Belongs to the DTD family. Homodimer.

The protein resides in the cytoplasm. It carries out the reaction glycyl-tRNA(Ala) + H2O = tRNA(Ala) + glycine + H(+). It catalyses the reaction a D-aminoacyl-tRNA + H2O = a tRNA + a D-alpha-amino acid + H(+). In terms of biological role, an aminoacyl-tRNA editing enzyme that deacylates mischarged D-aminoacyl-tRNAs. Also deacylates mischarged glycyl-tRNA(Ala), protecting cells against glycine mischarging by AlaRS. Acts via tRNA-based rather than protein-based catalysis; rejects L-amino acids rather than detecting D-amino acids in the active site. By recycling D-aminoacyl-tRNA to D-amino acids and free tRNA molecules, this enzyme counteracts the toxicity associated with the formation of D-aminoacyl-tRNA entities in vivo and helps enforce protein L-homochirality. The polypeptide is D-aminoacyl-tRNA deacylase (Burkholderia cenocepacia (strain ATCC BAA-245 / DSM 16553 / LMG 16656 / NCTC 13227 / J2315 / CF5610) (Burkholderia cepacia (strain J2315))).